A 232-amino-acid chain; its full sequence is Orotate phosphoribosyltransferase (232 aa).

5-phospho-alpha-D-ribose 1-diphosphate contacts are provided by residues Arg-107, Lys-108, Lys-111, and 133 to 141; that span reads EDLTTDGGS. Thr-137 contributes to the orotate binding site.

Belongs to the purine/pyrimidine phosphoribosyltransferase family. PyrE subfamily. As to quaternary structure, homodimer. Requires Mg(2+) as cofactor.

It carries out the reaction orotidine 5'-phosphate + diphosphate = orotate + 5-phospho-alpha-D-ribose 1-diphosphate. The protein operates within pyrimidine metabolism; UMP biosynthesis via de novo pathway; UMP from orotate: step 1/2. Catalyzes the transfer of a ribosyl phosphate group from 5-phosphoribose 1-diphosphate to orotate, leading to the formation of orotidine monophosphate (OMP). The chain is Orotate phosphoribosyltransferase from Cereibacter sphaeroides (strain ATCC 17025 / ATH 2.4.3) (Rhodobacter sphaeroides).